A 312-amino-acid polypeptide reads, in one-letter code: Ribonuclease HIII (312 aa).

The region spanning 95-311 is the RNase H type-2 domain; that stretch reads FNCIGSDEAG…REKAQKILKP (217 aa). Asp-101, Glu-102, and Asp-206 together coordinate a divalent metal cation.

Belongs to the RNase HII family. RnhC subfamily. Requires Mn(2+) as cofactor. The cofactor is Mg(2+).

It localises to the cytoplasm. It catalyses the reaction Endonucleolytic cleavage to 5'-phosphomonoester.. Endonuclease that specifically degrades the RNA of RNA-DNA hybrids. This Staphylococcus aureus (strain Mu3 / ATCC 700698) protein is Ribonuclease HIII.